Consider the following 582-residue polypeptide: SHC-transforming protein 2 (582 aa).

Disordered stretches follow at residues 1 to 24 (MTQGPGGRAPPAPPAPPEPEAPTT) and 47 to 70 (GPAAARAAGASGGADPQPEPAGPG). Positions 8–20 (RAPPAPPAPPEPE) are enriched in pro residues. The PID domain occupies 147–329 (LGPGVSYVVR…AGPEESAWGD (183 aa)). Positions 330-486 (EEDSLEHNYY…PTEEQLRQEP (157 aa)) are CH1. Phosphotyrosine is present on residues Tyr338, Tyr339, and Tyr414. The disordered stretch occupies residues 460-481 (PLEDQWPSPPTRRAPVAPTEEQ). The SH2 domain occupies 487–578 (WYHGRMSRRA…ESELHLRGVV (92 aa)).

As to quaternary structure, interacts with the Trk receptors in a phosphotyrosine-dependent manner and MEGF12. Once activated, binds to GRB2. Post-translationally, phosphorylated on tyrosines by the Trk receptors. As to expression, expressed in brain. Expressed at high level in the hypothalamus and at low level in the caudate nucleus.

Signaling adapter that couples activated growth factor receptors to signaling pathway in neurons. Involved in the signal transduction pathways of neurotrophin-activated Trk receptors in cortical neurons. This Homo sapiens (Human) protein is SHC-transforming protein 2 (SHC2).